The following is a 304-amino-acid chain: MTKVRKAIIPAAGLGTRFLPATKALAKEMLPIVDKPTIQFIVEEALKSGIEEILVVTGKAKRSIEDHFDSNFELEYNLQAKGKNELLKLVDETTAINLHFIRQSHPRGLGDAVLQAKAFVGNEPFVVMLGDDLMDITNASAKPLTKQLMEDYDKTHASTIAVMKVPHEDVSSYGVIAPQGKAVKGLYSVDTFVEKPQPEDAPSDLAIIGRYLLTPEIFGILERQTPGAGNEVQLTDAIDTLNKTQRVFAREFKGNRYDVGDKFGFMKTSIDYALEHPQVKEDLKNYIIKLGKALEKSKVPTHSK.

The protein belongs to the UDPGP type 2 family.

The enzyme catalyses alpha-D-glucose 1-phosphate + UTP + H(+) = UDP-alpha-D-glucose + diphosphate. It participates in carbohydrate metabolism; nucleotide-sugar metabolism. This is UTP--glucose-1-phosphate uridylyltransferase 1 (hasC1) from Streptococcus pyogenes serotype M1.